The chain runs to 282 residues: V-set domain-containing T-cell activation inhibitor 1 (282 aa).

The signal sequence occupies residues 1–24 (MASLGQILFWSIISIIIILAGAIA). At 25–259 (LIIGFGISGR…HLQLLNSKAS (235 aa)) the chain is on the extracellular side. 2 Ig-like V-type domains span residues 35 to 146 (HSIT…LEYK) and 153 to 241 (PEVN…IKVT). Disulfide bonds link cysteine 56–cysteine 130 and cysteine 168–cysteine 225. A glycan (N-linked (GlcNAc...) asparagine) is linked at asparagine 216. The helical transmembrane segment at 260–280 (LCVSSFFAISWALLPLSPYLM) threads the bilayer. Residues 281–282 (LK) are Cytoplasmic-facing.

The protein belongs to the immunoglobulin superfamily. BTN/MOG family. N-glycosylated. As to expression, overexpressed in breast, ovarian, endometrial, renal cell (RCC) and non-small-cell lung cancers (NSCLC). Expressed on activated T- and B-cells, monocytes and dendritic cells, but not expressed in most normal tissues (at protein level). Widely expressed, including in kidney, liver, lung, ovary, placenta, spleen and testis.

Its subcellular location is the cell membrane. Negatively regulates T-cell-mediated immune response by inhibiting T-cell activation, proliferation, cytokine production and development of cytotoxicity. When expressed on the cell surface of tumor macrophages, plays an important role, together with regulatory T-cells (Treg), in the suppression of tumor-associated antigen-specific T-cell immunity. Involved in promoting epithelial cell transformation. In Homo sapiens (Human), this protein is V-set domain-containing T-cell activation inhibitor 1.